We begin with the raw amino-acid sequence, 336 residues long: uncharacterized protein (336 aa).

This sequence belongs to the GppA/Ppx family.

This is an uncharacterized protein from Streptomyces coelicolor (strain ATCC BAA-471 / A3(2) / M145).